Consider the following 95-residue polypeptide: Aspartyl/glutamyl-tRNA(Asn/Gln) amidotransferase subunit C (95 aa).

This sequence belongs to the GatC family. As to quaternary structure, heterotrimer of A, B and C subunits.

It catalyses the reaction L-glutamyl-tRNA(Gln) + L-glutamine + ATP + H2O = L-glutaminyl-tRNA(Gln) + L-glutamate + ADP + phosphate + H(+). The catalysed reaction is L-aspartyl-tRNA(Asn) + L-glutamine + ATP + H2O = L-asparaginyl-tRNA(Asn) + L-glutamate + ADP + phosphate + 2 H(+). Allows the formation of correctly charged Asn-tRNA(Asn) or Gln-tRNA(Gln) through the transamidation of misacylated Asp-tRNA(Asn) or Glu-tRNA(Gln) in organisms which lack either or both of asparaginyl-tRNA or glutaminyl-tRNA synthetases. The reaction takes place in the presence of glutamine and ATP through an activated phospho-Asp-tRNA(Asn) or phospho-Glu-tRNA(Gln). The chain is Aspartyl/glutamyl-tRNA(Asn/Gln) amidotransferase subunit C from Dehalococcoides mccartyi (strain ATCC BAA-2100 / JCM 16839 / KCTC 5957 / BAV1).